We begin with the raw amino-acid sequence, 398 residues long: Elongation factor Tu (398 aa).

The tr-type G domain occupies 10 to 207; the sequence is KPHVNIGTIG…TVDDYIPDPE (198 aa). The segment at 19 to 26 is G1; that stretch reads GHVDHGKT. Residue 19–26 coordinates GTP; the sequence is GHVDHGKT. Position 26 (threonine 26) interacts with Mg(2+). Residues 63 to 67 are G2; the sequence is GITIN. A G3 region spans residues 84 to 87; the sequence is DAPG. Residues 84–88 and 139–142 each bind GTP; these read DAPGH and NKVD. Positions 139 to 142 are G4; that stretch reads NKVD. The interval 177-179 is G5; the sequence is SAL.

Belongs to the TRAFAC class translation factor GTPase superfamily. Classic translation factor GTPase family. EF-Tu/EF-1A subfamily. Monomer.

Its subcellular location is the cytoplasm. The enzyme catalyses GTP + H2O = GDP + phosphate + H(+). In terms of biological role, GTP hydrolase that promotes the GTP-dependent binding of aminoacyl-tRNA to the A-site of ribosomes during protein biosynthesis. The chain is Elongation factor Tu from Streptococcus mutans serotype c (strain ATCC 700610 / UA159).